The sequence spans 241 residues: Triosephosphate isomerase (241 aa).

9 to 11 (NWK) provides a ligand contact to substrate. The active-site Electrophile is His-96. The Proton acceptor role is filled by Glu-165. Substrate-binding positions include Gly-171, Ser-204, and 225-226 (GG).

The protein belongs to the triosephosphate isomerase family. As to quaternary structure, homodimer.

The protein resides in the cytoplasm. It carries out the reaction D-glyceraldehyde 3-phosphate = dihydroxyacetone phosphate. Its pathway is carbohydrate biosynthesis; gluconeogenesis. It participates in carbohydrate degradation; glycolysis; D-glyceraldehyde 3-phosphate from glycerone phosphate: step 1/1. Functionally, involved in the gluconeogenesis. Catalyzes stereospecifically the conversion of dihydroxyacetone phosphate (DHAP) to D-glyceraldehyde-3-phosphate (G3P). In Acaryochloris marina (strain MBIC 11017), this protein is Triosephosphate isomerase.